The following is a 756-amino-acid chain: Phosphoinositide 3-kinase regulatory subunit 6 (756 aa).

Disordered regions lie at residues 570–589 (SKSP…EGTG) and 716–738 (CSRT…EKNM). Over residues 717-731 (SRTQKSKTSALNSHG) the composition is skewed to polar residues.

Heterodimer of a catalytic subunit (PIK3CG) and a regulatory (PIK3R6) subunit. The binding of PIK3R6 to PIK3CG may exclude the binding of PIK3R5 to PIK3CG. Interacts with beta-gamma G protein dimers. Interacts with PDE3B and RAPGEF3; form a signaling complex that regulates phosphatidylinositol 3-kinase gamma in angiogenesis. Highly expressed in heart. In a lower extent, also expressed in brain, spleen, lung, liver, kidney, prostate, thyroid, salivary gland, dendritic cells, macrophages and neutrophils.

The protein resides in the cytoplasm. Its subcellular location is the cell membrane. In terms of biological role, regulatory subunit of the PI3K gamma complex. Acts as an adapter to drive activation of PIK3CG by beta-gamma G protein dimers. The PIK3CG:PIK3R6 heterodimer is much less sensitive to beta-gamma G proteins than PIK3CG:PIK3R5 and its membrane recruitment and beta-gamma G protein dimer-dependent activation requires HRAS bound to PIK3CG. Recruits of the PI3K gamma complex to a PDE3B:RAPGEF3 signaling complex involved in angiogenesis; signaling seems to involve RRAS. In Mus musculus (Mouse), this protein is Phosphoinositide 3-kinase regulatory subunit 6 (Pik3r6).